Reading from the N-terminus, the 543-residue chain is Chaperonin GroEL (543 aa).

Residues Thr29–Pro32, Lys50, Asp86–Thr90, Gly415, and Asp495 each bind ATP.

This sequence belongs to the chaperonin (HSP60) family. As to quaternary structure, forms a cylinder of 14 subunits composed of two heptameric rings stacked back-to-back. Interacts with the co-chaperonin GroES.

It localises to the cytoplasm. It catalyses the reaction ATP + H2O + a folded polypeptide = ADP + phosphate + an unfolded polypeptide.. Functionally, together with its co-chaperonin GroES, plays an essential role in assisting protein folding. The GroEL-GroES system forms a nano-cage that allows encapsulation of the non-native substrate proteins and provides a physical environment optimized to promote and accelerate protein folding. This Flavobacterium johnsoniae (strain ATCC 17061 / DSM 2064 / JCM 8514 / BCRC 14874 / CCUG 350202 / NBRC 14942 / NCIMB 11054 / UW101) (Cytophaga johnsonae) protein is Chaperonin GroEL.